A 112-amino-acid chain; its full sequence is U-scoloptoxin(16)-Er5a (112 aa).

The signal sequence occupies residues 1-26 (MNTVSVVQFLAVGCAVFVLYGRGVFA).

The protein belongs to the scoloptoxin-16 family. Post-translationally, contains 2 disulfide bonds. Expressed by the venom gland.

The protein localises to the secreted. The protein is U-scoloptoxin(16)-Er5a of Ethmostigmus rubripes (Giant centipede).